The following is a 156-amino-acid chain: MAQSVKTMVEGGKATTGPPIGPALGPLGLNVAQVVKEINEKTKEFQGMRVPVTITVVDPETKKYEITVGIPPTSALLKKKLGIEKGAAKRKEAIAGNATLDQIVDVAKTKMASMLASDLKAATLEVLGTCVSMGINVDGKDPKEVQRQIKAGEISI.

The segment at 1 to 20 (MAQSVKTMVEGGKATTGPPI) is disordered.

It belongs to the universal ribosomal protein uL11 family. As to quaternary structure, part of the ribosomal stalk of the 50S ribosomal subunit. Interacts with L10 and the large rRNA to form the base of the stalk. L10 forms an elongated spine to which L12 dimers bind in a sequential fashion forming a multimeric L10(L12)X complex.

Its function is as follows. Forms part of the ribosomal stalk which helps the ribosome interact with GTP-bound translation factors. The polypeptide is Large ribosomal subunit protein uL11 (Thermoplasma acidophilum (strain ATCC 25905 / DSM 1728 / JCM 9062 / NBRC 15155 / AMRC-C165)).